The sequence spans 459 residues: tRNA modification GTPase MnmE (459 aa).

Positions 22, 85, and 124 each coordinate (6S)-5-formyl-5,6,7,8-tetrahydrofolate. One can recognise a TrmE-type G domain in the interval Gly-221–Phe-380. Residue Asn-231 coordinates K(+). Residues Asn-231–Ser-236, Thr-250–Thr-256, and Asp-275–Gly-278 contribute to the GTP site. Ser-235 contributes to the Mg(2+) binding site. K(+) is bound by residues Thr-250, Val-252, and Thr-255. A Mg(2+)-binding site is contributed by Thr-256. A (6S)-5-formyl-5,6,7,8-tetrahydrofolate-binding site is contributed by Lys-459.

It belongs to the TRAFAC class TrmE-Era-EngA-EngB-Septin-like GTPase superfamily. TrmE GTPase family. Homodimer. Heterotetramer of two MnmE and two MnmG subunits. It depends on K(+) as a cofactor.

It localises to the cytoplasm. Functionally, exhibits a very high intrinsic GTPase hydrolysis rate. Involved in the addition of a carboxymethylaminomethyl (cmnm) group at the wobble position (U34) of certain tRNAs, forming tRNA-cmnm(5)s(2)U34. This is tRNA modification GTPase MnmE from Staphylococcus aureus (strain MSSA476).